The following is a 219-amino-acid chain: Protein RhiB (219 aa).

The segment covering 174–195 (AGISQQGNAAGTSISSKSTGSP) has biased composition (polar residues). The tract at residues 174-201 (AGISQQGNAAGTSISSKSTGSPENPART) is disordered.

May be involved in plant-microbe interaction. The polypeptide is Protein RhiB (rhiB) (Rhizobium leguminosarum bv. viciae).